A 33-amino-acid chain; its full sequence is Brevinin-2DYa (33 aa).

Cysteine 27 and cysteine 33 are oxidised to a cystine.

Expressed by the skin glands.

The protein resides in the secreted. Its function is as follows. Antimicrobial peptide. The polypeptide is Brevinin-2DYa (Rana dybowskii (Dybovsky's frog)).